The sequence spans 440 residues: 23S rRNA (uracil(1939)-C(5))-methyltransferase RlmD (440 aa).

The 59-residue stretch at 10–68 (KSTQPQRIEFTVDSLDHHCVGIGRHQGKAIFIEGALPGELVKARILEDKKQYAHAALQQ) folds into the TRAM domain. 4 residues coordinate [4Fe-4S] cluster: cysteine 81, cysteine 87, cysteine 90, and cysteine 169. Glutamine 273, phenylalanine 302, asparagine 307, glutamate 323, aspartate 350, and aspartate 371 together coordinate S-adenosyl-L-methionine. Cysteine 397 serves as the catalytic Nucleophile.

The protein belongs to the class I-like SAM-binding methyltransferase superfamily. RNA M5U methyltransferase family. RlmD subfamily.

The catalysed reaction is uridine(1939) in 23S rRNA + S-adenosyl-L-methionine = 5-methyluridine(1939) in 23S rRNA + S-adenosyl-L-homocysteine + H(+). Catalyzes the formation of 5-methyl-uridine at position 1939 (m5U1939) in 23S rRNA. This Aeromonas hydrophila subsp. hydrophila (strain ATCC 7966 / DSM 30187 / BCRC 13018 / CCUG 14551 / JCM 1027 / KCTC 2358 / NCIMB 9240 / NCTC 8049) protein is 23S rRNA (uracil(1939)-C(5))-methyltransferase RlmD.